The primary structure comprises 550 residues: Hydroxylamine reductase (550 aa).

Residues Cys3, Cys6, Cys18, and Cys25 each coordinate [2Fe-2S] cluster. The hybrid [4Fe-2O-2S] cluster site is built by His249, Glu273, Cys317, Cys405, Cys433, Cys458, Glu492, and Lys494. A Cysteine persulfide modification is found at Cys405.

The protein belongs to the HCP family. The cofactor is [2Fe-2S] cluster. Hybrid [4Fe-2O-2S] cluster serves as cofactor.

It is found in the cytoplasm. The enzyme catalyses A + NH4(+) + H2O = hydroxylamine + AH2 + H(+). Its function is as follows. Catalyzes the reduction of hydroxylamine to form NH(3) and H(2)O. The polypeptide is Hydroxylamine reductase (Escherichia coli O17:K52:H18 (strain UMN026 / ExPEC)).